The chain runs to 170 residues: Bifunctional protein PyrR (170 aa).

The PRPP-binding signature appears at 90–102 (LVLVDDVLMSGRT).

The protein belongs to the purine/pyrimidine phosphoribosyltransferase family. PyrR subfamily.

The enzyme catalyses UMP + diphosphate = 5-phospho-alpha-D-ribose 1-diphosphate + uracil. Functionally, regulates the transcription of the pyrimidine nucleotide (pyr) operon in response to exogenous pyrimidines. Also displays a weak uracil phosphoribosyltransferase activity which is not physiologically significant. In Pseudomonas aeruginosa (strain LESB58), this protein is Bifunctional protein PyrR.